The chain runs to 323 residues: Acetyl-coenzyme A carboxylase carboxyl transferase subunit alpha (323 aa).

Positions 32–293 (NISEEVAKLQ…RKALAAQLES (262 aa)) constitute a CoA carboxyltransferase C-terminal domain.

This sequence belongs to the AccA family. In terms of assembly, acetyl-CoA carboxylase is a heterohexamer composed of biotin carboxyl carrier protein (AccB), biotin carboxylase (AccC) and two subunits each of ACCase subunit alpha (AccA) and ACCase subunit beta (AccD).

Its subcellular location is the cytoplasm. The catalysed reaction is N(6)-carboxybiotinyl-L-lysyl-[protein] + acetyl-CoA = N(6)-biotinyl-L-lysyl-[protein] + malonyl-CoA. It participates in lipid metabolism; malonyl-CoA biosynthesis; malonyl-CoA from acetyl-CoA: step 1/1. Its function is as follows. Component of the acetyl coenzyme A carboxylase (ACC) complex. First, biotin carboxylase catalyzes the carboxylation of biotin on its carrier protein (BCCP) and then the CO(2) group is transferred by the carboxyltransferase to acetyl-CoA to form malonyl-CoA. This Alcanivorax borkumensis (strain ATCC 700651 / DSM 11573 / NCIMB 13689 / SK2) protein is Acetyl-coenzyme A carboxylase carboxyl transferase subunit alpha.